Reading from the N-terminus, the 199-residue chain is Holliday junction branch migration complex subunit RuvA (199 aa).

The domain I stretch occupies residues 1–63 (MIDYIKGNLV…EDSQRLFGFT (63 aa)). The tract at residues 64–142 (TRTERLLFEK…DMAPMLEPAA (79 aa)) is domain II. A flexible linker region spans residues 143 to 153 (GADKQQKNPQL). Positions 153-199 (LEDALEALRALGYVEKELKKVEKQLKAETLETDEYIRRALALMLKRP) are domain III.

Belongs to the RuvA family. As to quaternary structure, homotetramer. Forms an RuvA(8)-RuvB(12)-Holliday junction (HJ) complex. HJ DNA is sandwiched between 2 RuvA tetramers; dsDNA enters through RuvA and exits via RuvB. An RuvB hexamer assembles on each DNA strand where it exits the tetramer. Each RuvB hexamer is contacted by two RuvA subunits (via domain III) on 2 adjacent RuvB subunits; this complex drives branch migration. In the full resolvosome a probable DNA-RuvA(4)-RuvB(12)-RuvC(2) complex forms which resolves the HJ.

It is found in the cytoplasm. In terms of biological role, the RuvA-RuvB-RuvC complex processes Holliday junction (HJ) DNA during genetic recombination and DNA repair, while the RuvA-RuvB complex plays an important role in the rescue of blocked DNA replication forks via replication fork reversal (RFR). RuvA specifically binds to HJ cruciform DNA, conferring on it an open structure. The RuvB hexamer acts as an ATP-dependent pump, pulling dsDNA into and through the RuvAB complex. HJ branch migration allows RuvC to scan DNA until it finds its consensus sequence, where it cleaves and resolves the cruciform DNA. The chain is Holliday junction branch migration complex subunit RuvA from Shouchella clausii (strain KSM-K16) (Alkalihalobacillus clausii).